Reading from the N-terminus, the 443-residue chain is Exodeoxyribonuclease 7 large subunit (443 aa).

The protein belongs to the XseA family. Heterooligomer composed of large and small subunits.

The protein resides in the cytoplasm. The enzyme catalyses Exonucleolytic cleavage in either 5'- to 3'- or 3'- to 5'-direction to yield nucleoside 5'-phosphates.. Functionally, bidirectionally degrades single-stranded DNA into large acid-insoluble oligonucleotides, which are then degraded further into small acid-soluble oligonucleotides. The polypeptide is Exodeoxyribonuclease 7 large subunit (Legionella pneumophila (strain Paris)).